A 443-amino-acid chain; its full sequence is MQNELAQTIPELINWTKEREFSLSLSSDRLAFLLAISIYNNEQTDGELLESDLIDLFRYVSEVFDQSEATLTQRANNAINDLVKQRFLNRFSSEFTEGLAIYRITPLGVGVADYYVRQREFSTLRLSIQLSIVADEIQRASSAAEEGGDERFWRNNVFAPLKYSVAEIFDSIDLSQRMMDENQHQIRERIAELLSQNWHEAILSCEQLLDETSGNLRELQDTLNAAGDKLQAQLLRIQSCLIGRDDLDFVDQLIVNLQNKLDRIISWGQQAIDLWIGYDRHVHKFIRTAIDMDKNRVFGQRLRQSIQDYFKCALVTLYCEAESLLDLRDDETMLNEAEAVGELPSELEYESLSDVQEQIISVMQAHLAPFRAEGKPIDLGAVLREQLALYPQSRHFDVARIIVDQAVKLGMASLDSQAVYPEWQAINDKGAEVQANVIDQYNK.

Residues 209–237 (LDETSGNLRELQDTLNAAGDKLQAQLLRI) are leucine-zipper.

The protein belongs to the MukF family. Interacts, and probably forms a ternary complex, with MukE and MukB via its C-terminal region. The complex formation is stimulated by calcium or magnesium. It is required for an interaction between MukE and MukB.

It is found in the cytoplasm. The protein localises to the nucleoid. Its function is as follows. Involved in chromosome condensation, segregation and cell cycle progression. May participate in facilitating chromosome segregation by condensation DNA from both sides of a centrally located replisome during cell division. Not required for mini-F plasmid partitioning. Probably acts via its interaction with MukB and MukE. Overexpression results in anucleate cells. It has a calcium binding activity. This chain is Chromosome partition protein MukF, found in Actinobacillus pleuropneumoniae serotype 5b (strain L20).